Here is a 650-residue protein sequence, read N- to C-terminus: Threonine--tRNA ligase (650 aa).

Residues 5–67 (NKSMFIKLKD…QEGDQVILWG (63 aa)) enclose the TGS domain. The tract at residues 246-537 (DHKLLGAKLD…LIEHYVGKFP (292 aa)) is catalytic. The Zn(2+) site is built by Cys-337, His-388, and His-514.

Belongs to the class-II aminoacyl-tRNA synthetase family. In terms of assembly, homodimer. Zn(2+) is required as a cofactor.

Its subcellular location is the cytoplasm. It carries out the reaction tRNA(Thr) + L-threonine + ATP = L-threonyl-tRNA(Thr) + AMP + diphosphate + H(+). Functionally, catalyzes the attachment of threonine to tRNA(Thr) in a two-step reaction: L-threonine is first activated by ATP to form Thr-AMP and then transferred to the acceptor end of tRNA(Thr). Also edits incorrectly charged L-seryl-tRNA(Thr). This chain is Threonine--tRNA ligase, found in Protochlamydia amoebophila (strain UWE25).